A 436-amino-acid polypeptide reads, in one-letter code: 3-ketoacyl-CoA thiolase (436 aa).

Cys99 serves as the catalytic Acyl-thioester intermediate. Active-site proton acceptor residues include His392 and Cys422.

It belongs to the thiolase-like superfamily. Thiolase family. In terms of assembly, heterotetramer of two alpha chains (FadJ) and two beta chains (FadI).

It is found in the cytoplasm. It carries out the reaction an acyl-CoA + acetyl-CoA = a 3-oxoacyl-CoA + CoA. It functions in the pathway lipid metabolism; fatty acid beta-oxidation. Its function is as follows. Catalyzes the final step of fatty acid oxidation in which acetyl-CoA is released and the CoA ester of a fatty acid two carbons shorter is formed. The sequence is that of 3-ketoacyl-CoA thiolase from Escherichia coli O81 (strain ED1a).